Here is a 428-residue protein sequence, read N- to C-terminus: Histone deacetylase 3 (428 aa).

The interval 3 to 316 is histone deacetylase; it reads NRTSYFYDPD…WTFETSLLLE (314 aa). 1D-myo-inositol 1,4,5,6-tetrakisphosphate-binding residues include His17, Gly21, and Lys25. The active site involves His135. Asp170, His172, and Asp259 together coordinate Zn(2+). Position 265 (Arg265) interacts with 1D-myo-inositol 1,4,5,6-tetrakisphosphate. Residues 385–428 form a disordered region; that stretch reads LNYERNDEPDPDERGAEENYTRPEAANEFYDGDHDNDKESDVEI. 2 stretches are compositionally biased toward basic and acidic residues: residues 386–405 and 415–428; these read NYERNDEPDPDERGAEENYT and DGDHDNDKESDVEI.

Belongs to the histone deacetylase family. HD type 1 subfamily.

It localises to the nucleus. The protein localises to the chromosome. The protein resides in the cytoplasm. Its subcellular location is the cytosol. The catalysed reaction is N(6)-acetyl-L-lysyl-[histone] + H2O = L-lysyl-[histone] + acetate. With respect to regulation, inositol tetraphosphate (1D-myo-inositol 1,4,5,6-tetrakisphosphate) promotes the histone deacetylase activity by acting as an intermolecular glue between hdac3 and N-Cor repressor complex components. In terms of biological role, responsible for the deacetylation of lysine residues on the N-terminal part of the core histones (H2A, H2B, H3 and H4). Histone deacetylation gives a tag for epigenetic repression and plays an important role in transcriptional regulation, cell cycle progression and developmental events. Histone deacetylases act via the formation of large multiprotein complexes, such as N-Cor repressor complex, which activate the histone deacetylase activity. May play a role in the regulation of the circadian clock in a deacetylase activity-independent manner. In Tetraodon nigroviridis (Spotted green pufferfish), this protein is Histone deacetylase 3 (hdac3).